The chain runs to 321 residues: Ferredoxin--NADP reductase (321 aa).

7 residues coordinate FAD: glutamate 33, glutamine 41, tyrosine 46, valine 86, leucine 119, aspartate 277, and serine 318.

The protein belongs to the ferredoxin--NADP reductase type 2 family. In terms of assembly, homodimer. Requires FAD as cofactor.

The enzyme catalyses 2 reduced [2Fe-2S]-[ferredoxin] + NADP(+) + H(+) = 2 oxidized [2Fe-2S]-[ferredoxin] + NADPH. The sequence is that of Ferredoxin--NADP reductase from Lactococcus lactis subsp. cremoris (strain MG1363).